Reading from the N-terminus, the 729-residue chain is Fatty acid oxidation complex subunit alpha (729 aa).

Positions 1–189 (MLYKGDTLYL…KIGLVDGVVK (189 aa)) are enoyl-CoA hydratase/isomerase. D296 contacts substrate. The segment at 311–729 (ETPKQAAVLG…ARPVGDLKTA (419 aa)) is 3-hydroxyacyl-CoA dehydrogenase. NAD(+)-binding positions include M324, D343, 400-402 (VVE), K407, and S429. The active-site For 3-hydroxyacyl-CoA dehydrogenase activity is the H450. NAD(+) is bound at residue N453. Residues N500 and Y660 each contribute to the substrate site. The segment at 708-729 (RHNEPYYPPVEPARPVGDLKTA) is disordered.

The protein in the N-terminal section; belongs to the enoyl-CoA hydratase/isomerase family. This sequence in the C-terminal section; belongs to the 3-hydroxyacyl-CoA dehydrogenase family. In terms of assembly, heterotetramer of two alpha chains (FadB) and two beta chains (FadA).

It catalyses the reaction a (3S)-3-hydroxyacyl-CoA + NAD(+) = a 3-oxoacyl-CoA + NADH + H(+). The enzyme catalyses a (3S)-3-hydroxyacyl-CoA = a (2E)-enoyl-CoA + H2O. It carries out the reaction a 4-saturated-(3S)-3-hydroxyacyl-CoA = a (3E)-enoyl-CoA + H2O. The catalysed reaction is (3S)-3-hydroxybutanoyl-CoA = (3R)-3-hydroxybutanoyl-CoA. It catalyses the reaction a (3Z)-enoyl-CoA = a 4-saturated (2E)-enoyl-CoA. The enzyme catalyses a (3E)-enoyl-CoA = a 4-saturated (2E)-enoyl-CoA. It participates in lipid metabolism; fatty acid beta-oxidation. Functionally, involved in the aerobic and anaerobic degradation of long-chain fatty acids via beta-oxidation cycle. Catalyzes the formation of 3-oxoacyl-CoA from enoyl-CoA via L-3-hydroxyacyl-CoA. It can also use D-3-hydroxyacyl-CoA and cis-3-enoyl-CoA as substrate. The polypeptide is Fatty acid oxidation complex subunit alpha (Escherichia coli (strain K12 / MC4100 / BW2952)).